The primary structure comprises 316 residues: Very-long-chain 3-oxooacyl-coA reductase let-767 (316 aa).

NADP(+) is bound by residues 47-76 (ASWA…NVLL) and Asp106. Ser189 contacts substrate. Tyr202 (proton acceptor) is an active-site residue. NADP(+) is bound at residue Lys206.

It belongs to the short-chain dehydrogenases/reductases (SDR) family. 17-beta-HSD 3 subfamily. In terms of tissue distribution, expressed in the gut of larva and adult.

The catalysed reaction is a very-long-chain (3R)-3-hydroxyacyl-CoA + NADP(+) = a very-long-chain 3-oxoacyl-CoA + NADPH + H(+). It catalyses the reaction (omega-1)-methyl-(3R)-hydroxy-fatty acyl-CoA + NADP(+) = (omega-1)-methyl-3-oxo-fatty acyl-CoA + NADPH + H(+). It carries out the reaction a 17beta-hydroxy steroid + NADP(+) = a 17-oxo steroid + NADPH + H(+). It participates in lipid metabolism; fatty acid biosynthesis. Functionally, required for branched-chain fatty acid synthesis (such as (omega-1)-methyl-fatty acids). Catalyzes the reduction of the 3-keto-fatty acyl-CoA intermediate that is formed in each cycle of fatty acid elongation. Very long-chain fatty acids (VLCFAs) serve as precursors for ceramide and sphingolipids. Involved in hormone production as it metabolizes 4-androstendione (androst-4-ene-3,17-dione) into testosterone and estrone into estradiol (17beta-estradiol) in vitro, but the physiological steroid substrate is unknown. The sequence is that of Very-long-chain 3-oxooacyl-coA reductase let-767 (let-767) from Caenorhabditis elegans.